The following is a 574-amino-acid chain: Proline--tRNA ligase (574 aa).

It belongs to the class-II aminoacyl-tRNA synthetase family. ProS type 1 subfamily. In terms of assembly, homodimer.

The protein localises to the cytoplasm. It carries out the reaction tRNA(Pro) + L-proline + ATP = L-prolyl-tRNA(Pro) + AMP + diphosphate. Catalyzes the attachment of proline to tRNA(Pro) in a two-step reaction: proline is first activated by ATP to form Pro-AMP and then transferred to the acceptor end of tRNA(Pro). As ProRS can inadvertently accommodate and process non-cognate amino acids such as alanine and cysteine, to avoid such errors it has two additional distinct editing activities against alanine. One activity is designated as 'pretransfer' editing and involves the tRNA(Pro)-independent hydrolysis of activated Ala-AMP. The other activity is designated 'posttransfer' editing and involves deacylation of mischarged Ala-tRNA(Pro). The misacylated Cys-tRNA(Pro) is not edited by ProRS. The sequence is that of Proline--tRNA ligase from Nitrosococcus oceani (strain ATCC 19707 / BCRC 17464 / JCM 30415 / NCIMB 11848 / C-107).